The chain runs to 776 residues: Reticulon-1 (776 aa).

Disordered stretches follow at residues 1–101 (MAAP…KDGE), 137–168 (SESP…DSGI), 205–245 (VKHQ…PAPV), and 285–580 (LTEI…APPP). Ser327 carries the phosphoserine modification. The span at 328 to 341 (PGSITPPSSGTEPS) shows a compositional bias: low complexity. Phosphoserine is present on residues Ser350, Ser352, and Ser487. The segment covering 497–511 (AIREETGVRAEERAP) has biased composition (basic and acidic residues). The Reticulon domain maps to 589-776 (AIDLLYWRDI…KIPGAKRHAE (188 aa)). The next 2 helical transmembrane spans lie at 603-623 (IVFG…VVSV) and 705-725 (FAVL…LTLL).

Interacts with NDRG1. Interacts with BACE1. In terms of assembly, interacts with TMEM33. As to quaternary structure, interacts with UGCG; regulates the ceramide glucosyltransferase activity of UGCG. Post-translationally, isoforms RTN1-A and RTN1-B are phosphorylated. As to expression, expressed in neural and neuroendocrine tissues and cell cultures derived therefrom. Expression of isoform RTN1-C is strongly correlated with neuronal differentiation.

The protein localises to the endoplasmic reticulum membrane. It localises to the golgi apparatus membrane. Functionally, inhibits amyloid precursor protein processing, probably by blocking BACE1 activity. In Homo sapiens (Human), this protein is Reticulon-1 (RTN1).